We begin with the raw amino-acid sequence, 218 residues long: Adenylate kinase (218 aa).

10 to 15 (GAGKGT) is an ATP binding site. The segment at 30-59 (STGDMLRAAVKAGTPLGIAAKKIMDEGGLV) is NMP. Residues threonine 31, arginine 36, 57–59 (GLV), 85–88 (GFPR), and glutamine 92 each bind AMP. Positions 122-159 (GRRVHPASGRTYHVKFNPPKVAGRDDVTGEELIQRDDD) are LID. ATP contacts are provided by residues arginine 123 and 132–133 (TY). The AMP site is built by arginine 156 and arginine 167. Glycine 203 serves as a coordination point for ATP.

This sequence belongs to the adenylate kinase family. As to quaternary structure, monomer.

The protein resides in the cytoplasm. It carries out the reaction AMP + ATP = 2 ADP. The protein operates within purine metabolism; AMP biosynthesis via salvage pathway; AMP from ADP: step 1/1. In terms of biological role, catalyzes the reversible transfer of the terminal phosphate group between ATP and AMP. Plays an important role in cellular energy homeostasis and in adenine nucleotide metabolism. This chain is Adenylate kinase, found in Herminiimonas arsenicoxydans.